We begin with the raw amino-acid sequence, 675 residues long: MSIDLNWDTVTGGPDGQELAQKIRDFIHEKFQAVPLPRFIKSVTVHDFEFGSIPPEIELKDITDPLPDFYEEQPGIDSSEESDSEEEVAYENEGEYLDDPVEQQYGRLRGASASESRRRLTVNSSTGSRNGSGPNSGRVAYLPPHLNPHYNGGSGNNSSPSLDRDGRYYRDPNTAGLGGPAHGTNHHHADLGSPFLGVSTPGIPGGTSNLNLHYFTSQFTAGLSGTQTPLAAVAGAAHQRGPSWIADQQQQQQQQNNMLPGGAGGGGAGGGGMGGPVAAAAAAAAATNQGLHSSSTPHLRLHFPGVGTGKPTPGPSPLTGTSTPLGTLGTAGGVGGIGRGMGMAGMGSMASMGYPPTAPVLAIPTGPRHKRNPSSQSLNSVGDYSPVAPAPAERQGLFSAAAATSPPSSTPSPAVGLGIGGRGIGAAGAGAGALATSGPRLQIPKQGLREKHSVSTLAPNSAGTSNNRAGSAILDDDDGFLDGMHDHRDHPAQQQLEPEEDEEEEEEGEEERQRFREPRVEDIQAVFRIKYAGDVKLLLTADILLDYPMPSFVGIPVRLSITGLTFDGVGVVANIRKRVHFCFLSPEDAVAAVGGEENKAAGSGNGSGIGGGSDGAKTKMGGLLQEIRVESEIGQRESGKQSLKNVGKVERFVLEQVRRIFEEEFVYPSFWTFLV.

The SMP-LTD domain occupies 1–675; sequence MSIDLNWDTV…VYPSFWTFLV (675 aa). 5 disordered regions span residues 66–186, 241–270, 307–327, 365–390, and 444–517; these read LPDF…GTNH, GPSWIADQQQQQQQQNNMLPGGAGGGGAGG, GTGKPTPGPSPLTGTSTPLGT, TGPRHKRNPSSQSLNSVGDYSPVAPA, and PKQG…RFRE. Acidic residues predominate over residues 78–101; it reads SSEESDSEEEVAYENEGEYLDDPV. Residues 123 to 137 are compositionally biased toward low complexity; it reads NSSTGSRNGSGPNSG. Gly residues predominate over residues 261-270; sequence GGAGGGGAGG. Residues 317–327 are compositionally biased toward low complexity; sequence PLTGTSTPLGT. 2 stretches are compositionally biased toward polar residues: residues 373-382 and 454-469; these read PSSQSLNSVG and VSTLAPNSAGTSNNRA. Residues 497–510 show a composition bias toward acidic residues; it reads EPEEDEEEEEEGEE.

It belongs to the MDM12 family. Component of the ER-mitochondria encounter structure (ERMES) or MDM complex, composed of mmm-1, mdm10, mdm12 and mdm34. A mmm-1 homodimer associates with one molecule of mdm12 on each side in a pairwise head-to-tail manner, and the SMP-LTD domains of mmm-1 and mdm12 generate a continuous hydrophobic tunnel for phospholipid trafficking.

It is found in the mitochondrion outer membrane. Its subcellular location is the endoplasmic reticulum membrane. Its function is as follows. Component of the ERMES/MDM complex, which serves as a molecular tether to connect the endoplasmic reticulum (ER) and mitochondria. Components of this complex are involved in the control of mitochondrial shape and protein biogenesis, and function in nonvesicular lipid trafficking between the ER and mitochondria. Mdm12 is required for the interaction of the ER-resident membrane protein MMM1 and the outer mitochondrial membrane-resident beta-barrel protein mdm10. The mdm12-mmm-1 subcomplex functions in the major beta-barrel assembly pathway that is responsible for biogenesis of all mitochondrial outer membrane beta-barrel proteins, and acts in a late step after the SAM complex. The mdm10-mdm12-mmm-1 subcomplex further acts in the TOM40-specific pathway after the action of the mdm12-mmm1 complex. Essential for establishing and maintaining the structure of mitochondria and maintenance of mtDNA nucleoids. In Neurospora crassa (strain ATCC 24698 / 74-OR23-1A / CBS 708.71 / DSM 1257 / FGSC 987), this protein is Mitochondrial distribution and morphology protein 12.